The sequence spans 515 residues: Envelope glycoprotein (515 aa).

A signal peptide spans 1–33 (MPKERRSRRRPQPIIRWVSLTLTLLSLCQPIQT). Topologically, residues 34–435 (WRCSLSLGNQ…LGLTAWVRET (402 aa)) are extracellular. 2 N-linked (GlcNAc...) asparagine; by host glycosylation sites follow: N129 and N203. The CXXC motif lies at 212–215 (CAIC). 3 cysteine pairs are disulfide-bonded: C212-C215, C212-C392, and C384-C391. 5 N-linked (GlcNAc...) asparagine; by host glycosylation sites follow: N230, N251, N256, N271, and N287. The interval 304–324 (AAALTLGLALSVGLTGINVAV) is fusion peptide. Coiled-coil stretches lie at residues 330–376 (QRLT…WLYI) and 388–420 (NEPC…DWQW). N-linked (GlcNAc...) asparagine; by host glycosylation is present at N351. Residues 365-381 (AQNRRGLDWLYIRLGFQ) are immunosuppression. The short motif at 384–392 (CPTINEPCC) is the CX6CC element. N398 carries an N-linked (GlcNAc...) asparagine; by host glycan. The chain crosses the membrane as a helical span at residues 436–456 (IHSVLSLFLLALFLLFLAPCL). Residue C455 is the site of S-palmitoyl cysteine; by host attachment. Residues 457 to 515 (IKCLTSRLLKLLRQAPHFPEISLAPKPDSDYQALLPSAPEIYSHLSPTKPDYINLRPCP) lie on the Cytoplasmic side of the membrane.

In terms of assembly, the mature envelope protein (Env) consists of a trimer of SU-TM heterodimers attached by a labile interchain disulfide bond. Post-translationally, specific enzymatic cleavages in vivo yield mature proteins. Envelope glycoproteins are synthesized as an inactive precursor that is N-glycosylated and processed likely by host cell furin or by a furin-like protease in the Golgi to yield the mature SU and TM proteins. The cleavage site between SU and TM requires the minimal sequence [KR]-X-[KR]-R. The CXXC motif is highly conserved across a broad range of retroviral envelope proteins. It is thought to participate in the formation of a labile disulfide bond possibly with the CX6CC motif present in the transmembrane protein. Isomerization of the intersubunit disulfide bond to an SU intrachain disulfide bond is thought to occur upon receptor recognition in order to allow membrane fusion. In terms of processing, the transmembrane protein is palmitoylated.

It is found in the virion membrane. It localises to the host cell membrane. The surface protein (SU) attaches the virus to the host cell by binding to its receptor. This interaction triggers the refolding of the transmembrane protein (TM) and is thought to activate its fusogenic potential by unmasking its fusion peptide. Fusion occurs at the host cell plasma membrane. In terms of biological role, the transmembrane protein (TM) acts as a class I viral fusion protein. Under the current model, the protein has at least 3 conformational states: pre-fusion native state, pre-hairpin intermediate state, and post-fusion hairpin state. During viral and target cell membrane fusion, the coiled coil regions (heptad repeats) assume a trimer-of-hairpins structure, positioning the fusion peptide in close proximity to the C-terminal region of the ectodomain. The formation of this structure appears to drive apposition and subsequent fusion of viral and target cell membranes. Membranes fusion leads to delivery of the nucleocapsid into the cytoplasm. In Bovine leukemia virus (isolate Belgium LB285) (BLV), this protein is Envelope glycoprotein (env).